A 420-amino-acid polypeptide reads, in one-letter code: Gamma-glutamyl phosphate reductase (420 aa).

The protein belongs to the gamma-glutamyl phosphate reductase family.

It is found in the cytoplasm. It catalyses the reaction L-glutamate 5-semialdehyde + phosphate + NADP(+) = L-glutamyl 5-phosphate + NADPH + H(+). The protein operates within amino-acid biosynthesis; L-proline biosynthesis; L-glutamate 5-semialdehyde from L-glutamate: step 2/2. In terms of biological role, catalyzes the NADPH-dependent reduction of L-glutamate 5-phosphate into L-glutamate 5-semialdehyde and phosphate. The product spontaneously undergoes cyclization to form 1-pyrroline-5-carboxylate. The sequence is that of Gamma-glutamyl phosphate reductase from Streptococcus pneumoniae serotype 2 (strain D39 / NCTC 7466).